Reading from the N-terminus, the 406-residue chain is Peptidase T (406 aa).

H82 contacts Zn(2+). D84 is a catalytic residue. D142 contributes to the Zn(2+) binding site. E176 serves as the catalytic Proton acceptor. Zn(2+)-binding residues include E177, D199, and H381.

This sequence belongs to the peptidase M20B family. Zn(2+) is required as a cofactor.

The protein resides in the cytoplasm. The catalysed reaction is Release of the N-terminal residue from a tripeptide.. Its function is as follows. Cleaves the N-terminal amino acid of tripeptides. The chain is Peptidase T from Streptococcus agalactiae serotype V (strain ATCC BAA-611 / 2603 V/R).